The sequence spans 476 residues: Aspartyl/glutamyl-tRNA(Asn/Gln) amidotransferase subunit B (476 aa).

This sequence belongs to the GatB/GatE family. GatB subfamily. As to quaternary structure, heterotrimer of A, B and C subunits.

It catalyses the reaction L-glutamyl-tRNA(Gln) + L-glutamine + ATP + H2O = L-glutaminyl-tRNA(Gln) + L-glutamate + ADP + phosphate + H(+). It carries out the reaction L-aspartyl-tRNA(Asn) + L-glutamine + ATP + H2O = L-asparaginyl-tRNA(Asn) + L-glutamate + ADP + phosphate + 2 H(+). Allows the formation of correctly charged Asn-tRNA(Asn) or Gln-tRNA(Gln) through the transamidation of misacylated Asp-tRNA(Asn) or Glu-tRNA(Gln) in organisms which lack either or both of asparaginyl-tRNA or glutaminyl-tRNA synthetases. The reaction takes place in the presence of glutamine and ATP through an activated phospho-Asp-tRNA(Asn) or phospho-Glu-tRNA(Gln). The sequence is that of Aspartyl/glutamyl-tRNA(Asn/Gln) amidotransferase subunit B from Bacillus licheniformis (strain ATCC 14580 / DSM 13 / JCM 2505 / CCUG 7422 / NBRC 12200 / NCIMB 9375 / NCTC 10341 / NRRL NRS-1264 / Gibson 46).